A 274-amino-acid chain; its full sequence is Protein CURLY FLAG LEAF 1 (274 aa).

The tract at residues 17-44 (SLNGGGGGGGGRRRGRRAAAAEGSDDSE) is disordered. Residues 47–52 (TVELNS) carry the EAR motif. One can recognise a WW domain in the interval 54–88 (VALPYHWEQCLDIRTGQVYYINWEDGTRTTIDPRS). Disordered regions lie at residues 83–133 (TIDP…SGYT) and 175–216 (GRDG…SPTD). 3 stretches are compositionally biased toward low complexity: residues 87–106 (RSSSAYSPSPASRSASSSSR), 121–133 (AAAASTTTSSGYT), and 184–207 (SSSSSSSSSSSSSASSSRGSAVSS).

As to quaternary structure, binds to HDG1.

In terms of biological role, negatively regulates the cuticle development probably by interacting with the HD-ZIP IV transcription factor HDG1. The sequence is that of Protein CURLY FLAG LEAF 1 from Oryza sativa subsp. japonica (Rice).